A 76-amino-acid polypeptide reads, in one-letter code: MSRFFRRRKFCRFTAERVTEIDYKDTVTLKNYITESGKIVPSRITGTRAKYQRQLARAIKRARYLALLPYTDLHNK.

Belongs to the bacterial ribosomal protein bS18 family. In terms of assembly, part of the 30S ribosomal subunit. Forms a tight heterodimer with protein bS6.

Functionally, binds as a heterodimer with protein bS6 to the central domain of the 16S rRNA, where it helps stabilize the platform of the 30S subunit. The polypeptide is Small ribosomal subunit protein bS18 (Tolumonas auensis (strain DSM 9187 / NBRC 110442 / TA 4)).